The following is a 298-amino-acid chain: Cytochrome c oxidase subunit 2 (298 aa).

Residues 1-29 (MMAIATKRRGVAAVMSLGVATMTAVPALA) form the signal peptide. Gln-30 carries the pyrrolidone carboxylic acid modification. The Periplasmic segment spans residues 30 to 55 (QDVLGDLPVIGKPVNGGMNFQPASSP). A helical transmembrane segment spans residues 56-88 (LAHDQQWLDHFVLYIITAVTIFVCLLLLICIVR). Residues 89–103 (FNRRANPVPARFTHN) are Cytoplasmic-facing. Residues 104–134 (TPIEVIWTLVPVLILVAIGAFSLPILFRSQE) form a helical membrane-spanning segment. Residues 135-280 (MPNDPDLVIK…WLAGAKEEFA (146 aa)) lie on the Periplasmic side of the membrane. Positions 210, 245, 247, 249, 253, and 256 each coordinate Cu cation. A propeptide spans 281–298 (ADASDYLPASPVKLASAE) (C-terminal propeptide).

It belongs to the cytochrome c oxidase subunit 2 family. Requires binuclear copper center (CuA) as cofactor.

It is found in the cell inner membrane. It carries out the reaction 4 Fe(II)-[cytochrome c] + O2 + 8 H(+)(in) = 4 Fe(III)-[cytochrome c] + 2 H2O + 4 H(+)(out). Functionally, subunits I and II form the functional core of the enzyme complex. Electrons originating in cytochrome c are transferred via heme a and Cu(A) to the binuclear center formed by heme a3 and Cu(B). The protein is Cytochrome c oxidase subunit 2 (ctaC) of Paracoccus denitrificans.